The sequence spans 66 residues: Toxin Boma6b (66 aa).

An LCN-type CS-alpha/beta domain is found at 2–64 (RDAYIAQNYN…VPIKVEGKCH (63 aa)). Disulfide bonds link Cys-12-Cys-63, Cys-16-Cys-36, Cys-22-Cys-46, and Cys-26-Cys-48.

Belongs to the long (4 C-C) scorpion toxin superfamily. Sodium channel inhibitor family. Alpha subfamily. In terms of tissue distribution, expressed by the venom gland.

Its subcellular location is the secreted. In terms of biological role, alpha toxins bind voltage-independently at site-3 of sodium channels (Nav) and inhibit the inactivation of the activated channels, thereby blocking neuronal transmission. The sequence is that of Toxin Boma6b from Buthus occitanus mardochei (Moroccan scorpion).